The chain runs to 159 residues: MANLVKTFLLGELVKGMGVTLKNFFARKDTIYFPEEKTPQSVRFRGLHAQRRYPNGEERCIACKLCEAVCPAMAINIESEEREDGTRRTKRYDIDLTKCIFCGFCEEACPTDAIVETHIFEYHGEKKGDLHMTKPILLAIGDKYEAEIAKRKAADAPYR.

2 4Fe-4S ferredoxin-type domains span residues 50–80 (QRRY…IESE) and 90–119 (KRYD…ETHI). 8 residues coordinate [4Fe-4S] cluster: cysteine 60, cysteine 63, cysteine 66, cysteine 70, cysteine 99, cysteine 102, cysteine 105, and cysteine 109.

The protein belongs to the complex I 23 kDa subunit family. As to quaternary structure, NDH-1 is composed of 14 different subunits. Subunits NuoA, H, J, K, L, M, N constitute the membrane sector of the complex. [4Fe-4S] cluster is required as a cofactor.

It localises to the cell inner membrane. The enzyme catalyses a quinone + NADH + 5 H(+)(in) = a quinol + NAD(+) + 4 H(+)(out). Its function is as follows. NDH-1 shuttles electrons from NADH, via FMN and iron-sulfur (Fe-S) centers, to quinones in the respiratory chain. The immediate electron acceptor for the enzyme in this species is believed to be ubiquinone. Couples the redox reaction to proton translocation (for every two electrons transferred, four hydrogen ions are translocated across the cytoplasmic membrane), and thus conserves the redox energy in a proton gradient. The sequence is that of NADH-quinone oxidoreductase subunit I from Neisseria meningitidis serogroup A / serotype 4A (strain DSM 15465 / Z2491).